The chain runs to 520 residues: Membrane-bound glycerophospholipid O-acyltransferase 2 (520 aa).

A run of 6 helical transmembrane segments spans residues proline 22 to phenylalanine 42, threonine 61 to valine 81, cysteine 88 to glycine 108, phenylalanine 184 to glycine 204, leucine 237 to glutamate 257, and phenylalanine 264 to alanine 284. Residues asparagine 342 and histidine 373 contribute to the active site. A run of 3 helical transmembrane segments spans residues phenylalanine 366–glycine 386, valine 416–leucine 436, and phenylalanine 444–proline 464.

The protein belongs to the membrane-bound acyltransferase family. Expressed in neutrophils.

It is found in the endoplasmic reticulum membrane. The catalysed reaction is a 1-acyl-sn-glycero-3-phosphocholine + an acyl-CoA = a 1,2-diacyl-sn-glycero-3-phosphocholine + CoA. It carries out the reaction a 1-acyl-sn-glycero-3-phosphoethanolamine + an acyl-CoA = a 1,2-diacyl-sn-glycero-3-phosphoethanolamine + CoA. It catalyses the reaction a 1-acyl-sn-glycero-3-phosphate + an acyl-CoA = a 1,2-diacyl-sn-glycero-3-phosphate + CoA. The enzyme catalyses (9Z)-hexadecenoyl-CoA + 1-hexadecanoyl-sn-glycero-3-phosphocholine = 1-hexadecanoyl-2-(9Z-hexadecenoyl)-sn-glycero-3-phosphocholine + CoA. The catalysed reaction is 1-hexadecanoyl-sn-glycero-3-phosphoethanolamine + (9Z)-octadecenoyl-CoA = 1-hexadecanoyl-2-(9Z-octadecenoyl)-sn-glycero-3-phosphoethanolamine + CoA. It carries out the reaction 1-hexadecanoyl-sn-glycero-3-phosphoethanolamine + (9Z)-hexadecenoyl-CoA = 1-hexadecanoyl-2-(9Z)-hexadecenoyl-sn-glycero-3-phosphoethanolamine + CoA. It catalyses the reaction 1-(9Z-octadecenoyl)-sn-glycero-3-phospho-L-serine + hexadecanoyl-CoA = 1-(9Z)-octadecenoyl-2-hexadecanoyl-sn-glycero-3-phosphoserine + CoA. The enzyme catalyses (9Z,12Z)-octadecadienoyl-CoA + 1-hexadecanoyl-sn-glycero-3-phosphocholine = 1-hexadecanoyl-2-(9Z,12Z-octadecadienoyl)-sn-glycero-3-phosphocholine + CoA. The catalysed reaction is 1-hexadecanoyl-sn-glycero-3-phosphocholine + (9Z)-octadecenoyl-CoA = 1-hexadecanoyl-2-(9Z-octadecenoyl)-sn-glycero-3-phosphocholine + CoA. It carries out the reaction 1-hexadecanoyl-sn-glycero-3-phosphate + (9Z)-hexadecenoyl-CoA = 1-hexadecanoyl-2-[(9Z)-hexadec-9-enoyl]-sn-glycero-3-phosphate + CoA. It catalyses the reaction 1-hexadecanoyl-sn-glycero-3-phosphate + (9Z)-octadecenoyl-CoA = 1-hexadecanoyl-2-(9Z-octadecenoyl)-sn-glycero-3-phosphate + CoA. The enzyme catalyses a 1-O-(1Z-alkenyl)-sn-glycero-3-phosphocholine + (9Z)-octadecenoyl-CoA = 1-O-(1Z)-alkenyl-2-(9Z)-octadecenoyl-sn-glycero-3-phosphocholine + CoA. The catalysed reaction is a 1-O-(1Z-alkenyl)-sn-glycero-3-phosphoethanolamine + (9Z)-octadecenoyl-CoA = 1-O-(1Z)-alkenyl-2-(9Z)-octadecenoyl-sn-glycero-3-phosphoethanolamine + CoA. It carries out the reaction 1-octadecanoyl-sn-glycero-3-phosphoethanolamine + (9Z)-octadecenoyl-CoA = 1-octadecanoyl-2-(9Z-octadecenoyl)-sn-glycero-3-phosphoethanolamine + CoA. It catalyses the reaction 1-octadecanoyl-sn-glycero-3-phosphocholine + (9Z)-octadecenoyl-CoA = 1-octadecanoyl-2-(9Z-octadecenoyl)-sn-glycero-3-phosphocholine + CoA. The enzyme catalyses 1-(9Z-octadecenoyl)-sn-glycero-3-phosphoethanolamine + (9Z)-octadecenoyl-CoA = 1,2-di-(9Z-octadecenoyl)-sn-glycero-3-phosphoethanolamine + CoA. It participates in lipid metabolism; phospholipid metabolism. With respect to regulation, partially inhibited by thimerosal. Its function is as follows. Acyltransferase which catalyzes the transfer of an acyl group from an acyl-CoA to a lysophospholipid leading to the production of a phospholipid and participates in the reacylation step of the phospholipid remodeling pathway also known as the Lands cycle. Catalyzes preferentially the acylation of lysophosphatidylethanolamine (1-acyl-sn-glycero-3-phosphoethanolamine or LPE) and lysophosphatidic acid (LPA) and to a lesser extend lysophosphatidylcholine (LPC) and lysophosphatidylserine (LPS). Prefers oleoyl-CoA as the acyl donor. May be involved in chondrocyte differentiation. This Homo sapiens (Human) protein is Membrane-bound glycerophospholipid O-acyltransferase 2.